The primary structure comprises 469 residues: Glutamate--tRNA ligase (469 aa).

The short motif at 8 to 18 is the 'HIGH' region element; it reads PSPTGFLHVGG. Residues Cys97, Cys99, Cys124, and Asp126 each coordinate Zn(2+). The 'KMSKS' region signature appears at 236–240; that stretch reads KLSKR. Lys239 contributes to the ATP binding site.

Belongs to the class-I aminoacyl-tRNA synthetase family. Glutamate--tRNA ligase type 1 subfamily. Monomer. Zn(2+) serves as cofactor.

The protein localises to the cytoplasm. It carries out the reaction tRNA(Glu) + L-glutamate + ATP = L-glutamyl-tRNA(Glu) + AMP + diphosphate. Its function is as follows. Catalyzes the attachment of glutamate to tRNA(Glu) in a two-step reaction: glutamate is first activated by ATP to form Glu-AMP and then transferred to the acceptor end of tRNA(Glu). The protein is Glutamate--tRNA ligase of Francisella philomiragia subsp. philomiragia (strain ATCC 25017 / CCUG 19701 / FSC 153 / O#319-036).